The sequence spans 153 residues: MKEKISNNIQIKNKRATFDYELLDTFTAGIVLTGTEIKSIRLGKASLVDTFCIVEKGELWVKNMYIAEYFYGTYNNHNARRDRKLLLTKKELRKIEGAVRASGFTIVPTRLFINEKGLAKVVVAIARGKKEYDKRDSIRERDDRREMDRAFKR.

Residues 131 to 153 form a disordered region; that stretch reads EYDKRDSIRERDDRREMDRAFKR.

Belongs to the SmpB family.

The protein resides in the cytoplasm. Required for rescue of stalled ribosomes mediated by trans-translation. Binds to transfer-messenger RNA (tmRNA), required for stable association of tmRNA with ribosomes. tmRNA and SmpB together mimic tRNA shape, replacing the anticodon stem-loop with SmpB. tmRNA is encoded by the ssrA gene; the 2 termini fold to resemble tRNA(Ala) and it encodes a 'tag peptide', a short internal open reading frame. During trans-translation Ala-aminoacylated tmRNA acts like a tRNA, entering the A-site of stalled ribosomes, displacing the stalled mRNA. The ribosome then switches to translate the ORF on the tmRNA; the nascent peptide is terminated with the 'tag peptide' encoded by the tmRNA and targeted for degradation. The ribosome is freed to recommence translation, which seems to be the essential function of trans-translation. In Parabacteroides distasonis (strain ATCC 8503 / DSM 20701 / CIP 104284 / JCM 5825 / NCTC 11152), this protein is SsrA-binding protein.